A 785-amino-acid chain; its full sequence is E3 UFM1-protein ligase 1 homolog (785 aa).

Residues 405–483 are disordered; it reads ASFQDQDDDG…GGGGGNKKTV (79 aa).

The protein belongs to the UFL1 family.

E3 UFM1-protein ligase that mediates ufmylation of target proteins. The chain is E3 UFM1-protein ligase 1 homolog from Drosophila pseudoobscura pseudoobscura (Fruit fly).